A 329-amino-acid chain; its full sequence is 4-hydroxythreonine-4-phosphate dehydrogenase (329 aa).

Substrate is bound by residues H136 and T137. 3 residues coordinate a divalent metal cation: H166, H211, and H266. Substrate-binding residues include K274, N283, and R292.

It belongs to the PdxA family. In terms of assembly, homodimer. Zn(2+) serves as cofactor. Mg(2+) is required as a cofactor. The cofactor is Co(2+).

The protein resides in the cytoplasm. The catalysed reaction is 4-(phosphooxy)-L-threonine + NAD(+) = 3-amino-2-oxopropyl phosphate + CO2 + NADH. The protein operates within cofactor biosynthesis; pyridoxine 5'-phosphate biosynthesis; pyridoxine 5'-phosphate from D-erythrose 4-phosphate: step 4/5. In terms of biological role, catalyzes the NAD(P)-dependent oxidation of 4-(phosphooxy)-L-threonine (HTP) into 2-amino-3-oxo-4-(phosphooxy)butyric acid which spontaneously decarboxylates to form 3-amino-2-oxopropyl phosphate (AHAP). The polypeptide is 4-hydroxythreonine-4-phosphate dehydrogenase (Escherichia coli O7:K1 (strain IAI39 / ExPEC)).